Consider the following 88-residue polypeptide: Large ribosomal subunit protein bL31B (88 aa).

Belongs to the bacterial ribosomal protein bL31 family. Type B subfamily. Part of the 50S ribosomal subunit.

The protein is Large ribosomal subunit protein bL31B of Bordetella bronchiseptica (strain ATCC BAA-588 / NCTC 13252 / RB50) (Alcaligenes bronchisepticus).